Here is a 317-residue protein sequence, read N- to C-terminus: Acetyl-coenzyme A carboxylase carboxyl transferase subunit alpha (317 aa).

Residues 37–292 form the CoA carboxyltransferase C-terminal domain; it reads RLEKKAEKLR…RICLKKHLDD (256 aa).

This sequence belongs to the AccA family. In terms of assembly, acetyl-CoA carboxylase is a heterohexamer composed of biotin carboxyl carrier protein (AccB), biotin carboxylase (AccC) and two subunits each of ACCase subunit alpha (AccA) and ACCase subunit beta (AccD).

The protein resides in the cytoplasm. The catalysed reaction is N(6)-carboxybiotinyl-L-lysyl-[protein] + acetyl-CoA = N(6)-biotinyl-L-lysyl-[protein] + malonyl-CoA. It participates in lipid metabolism; malonyl-CoA biosynthesis; malonyl-CoA from acetyl-CoA: step 1/1. Component of the acetyl coenzyme A carboxylase (ACC) complex. First, biotin carboxylase catalyzes the carboxylation of biotin on its carrier protein (BCCP) and then the CO(2) group is transferred by the carboxyltransferase to acetyl-CoA to form malonyl-CoA. In Syntrophotalea carbinolica (strain DSM 2380 / NBRC 103641 / GraBd1) (Pelobacter carbinolicus), this protein is Acetyl-coenzyme A carboxylase carboxyl transferase subunit alpha.